The primary structure comprises 437 residues: MRQWTAIHLAKLARKASRAVGKRGTDLPGQIARKVDTDILRKLAEQVDDIVFISGTNGKTTTSNLIGHTLKANNIQIIHNNEGANMAAGITSAFIMQSTPKTKIAVIEIDEGSIPRVLKEVTPSMMVFTNFFRDQMDRFGEIDIMVNNIAETISNKGIKLLLNADDPFVSRLKIASDTIVYYGMKAHAHEFEQSTMNESRYCPNCGRLLQYDYIHYNQIGHYHCQCGFKREQAKYEISSFDVAPFLYLNINDEKYDMKIAGDFNAYNALAAYTVLRELGLNEQTIKNGFETYTSDNGRMQYFKKERKEAMINLAKNPAGMNASLSVGEQLEGEKVYVISLNDNAADGRDTSWIYDADFEKLSKQQIEAIIVTGTRAEELQLRLKLAEVEVPIIVERDIYKATAKTMDYKGFTVAIPNYTSLAPMLEQLNRSFEGGQS.

Positions 202, 205, 224, and 226 each coordinate Zn(2+). Residue D349 is part of the active site.

This sequence belongs to the MurCDEF family. MurT subfamily. In terms of assembly, forms a heterodimer with GatD.

The enzyme catalyses beta-D-GlcNAc-(1-&gt;4)-Mur2Ac(oyl-L-Ala-gamma-D-Glu-L-Lys-D-Ala-D-Ala)-di-trans,octa-cis-undecaprenyl diphosphate + L-glutamine + ATP + H2O = beta-D-GlcNAc-(1-&gt;4)-Mur2Ac(oyl-L-Ala-D-isoglutaminyl-L-Lys-D-Ala-D-Ala)-di-trans,octa-cis-undecaprenyl diphosphate + L-glutamate + ADP + phosphate + H(+). It catalyses the reaction beta-D-GlcNAc-(1-&gt;4)-Mur2Ac(oyl-L-Ala-gamma-D-Glu-L-Lys-D-Ala-D-Ala)-di-trans,octa-cis-undecaprenyl diphosphate + ATP = beta-D-GlcNAc-(1-&gt;4)-Mur2Ac(oyl-L-Ala-gamma-D-O-P-Glu-L-Lys-D-Ala-D-Ala)-di-trans,octa-cis-undecaprenyl diphosphate + ADP. The catalysed reaction is beta-D-GlcNAc-(1-&gt;4)-Mur2Ac(oyl-L-Ala-gamma-D-O-P-Glu-L-Lys-D-Ala-D-Ala)-di-trans,octa-cis-undecaprenyl diphosphate + NH4(+) = beta-D-GlcNAc-(1-&gt;4)-Mur2Ac(oyl-L-Ala-D-isoglutaminyl-L-Lys-D-Ala-D-Ala)-di-trans,octa-cis-undecaprenyl diphosphate + phosphate + H(+). It participates in cell wall biogenesis; peptidoglycan biosynthesis. Its function is as follows. The lipid II isoglutaminyl synthase complex catalyzes the formation of alpha-D-isoglutamine in the cell wall lipid II stem peptide. The MurT subunit catalyzes the ATP-dependent amidation of D-glutamate residue of lipid II, converting it to an isoglutamine residue. In Staphylococcus aureus (strain COL), this protein is Lipid II isoglutaminyl synthase (glutamine-hydrolyzing) subunit MurT.